The sequence spans 239 residues: 4-hydroxy-tetrahydrodipicolinate reductase (239 aa).

NAD(+)-binding positions include 9 to 14 (GINGKI), 78 to 80 (GTT), and 104 to 107 (APNF). The active-site Proton donor/acceptor is H134. Residue H135 participates in (S)-2,3,4,5-tetrahydrodipicolinate binding. Residue K138 is the Proton donor of the active site. Position 144-145 (144-145 (GT)) interacts with (S)-2,3,4,5-tetrahydrodipicolinate.

It belongs to the DapB family.

It localises to the cytoplasm. The enzyme catalyses (S)-2,3,4,5-tetrahydrodipicolinate + NAD(+) + H2O = (2S,4S)-4-hydroxy-2,3,4,5-tetrahydrodipicolinate + NADH + H(+). It carries out the reaction (S)-2,3,4,5-tetrahydrodipicolinate + NADP(+) + H2O = (2S,4S)-4-hydroxy-2,3,4,5-tetrahydrodipicolinate + NADPH + H(+). It functions in the pathway amino-acid biosynthesis; L-lysine biosynthesis via DAP pathway; (S)-tetrahydrodipicolinate from L-aspartate: step 4/4. Its function is as follows. Catalyzes the conversion of 4-hydroxy-tetrahydrodipicolinate (HTPA) to tetrahydrodipicolinate. In Coxiella burnetii (strain CbuG_Q212) (Coxiella burnetii (strain Q212)), this protein is 4-hydroxy-tetrahydrodipicolinate reductase.